Reading from the N-terminus, the 471-residue chain is Ribulose bisphosphate carboxylase large chain (471 aa).

Substrate is bound by residues Asn-119 and Thr-169. The active-site Proton acceptor is the Lys-171. Lys-173 lines the substrate pocket. Lys-197, Asp-199, and Glu-200 together coordinate Mg(2+). Lys-197 is subject to N6-carboxylysine. The active-site Proton acceptor is His-290. Substrate contacts are provided by Arg-291, His-323, and Ser-375.

It belongs to the RuBisCO large chain family. Type I subfamily. Heterohexadecamer of 8 large chains and 8 small chains; disulfide-linked. The disulfide link is formed within the large subunit homodimers. It depends on Mg(2+) as a cofactor. Post-translationally, the disulfide bond which can form in the large chain dimeric partners within the hexadecamer appears to be associated with oxidative stress and protein turnover.

It localises to the carboxysome. The enzyme catalyses 2 (2R)-3-phosphoglycerate + 2 H(+) = D-ribulose 1,5-bisphosphate + CO2 + H2O. The catalysed reaction is D-ribulose 1,5-bisphosphate + O2 = 2-phosphoglycolate + (2R)-3-phosphoglycerate + 2 H(+). RuBisCO catalyzes two reactions: the carboxylation of D-ribulose 1,5-bisphosphate, the primary event in carbon dioxide fixation, as well as the oxidative fragmentation of the pentose substrate in the photorespiration process. Both reactions occur simultaneously and in competition at the same active site. The protein is Ribulose bisphosphate carboxylase large chain of Crocosphaera subtropica (strain ATCC 51142 / BH68) (Cyanothece sp. (strain ATCC 51142)).